A 356-amino-acid chain; its full sequence is MENFLDNKNMLYALKMISPGTPLRLGLNNVLRAKTGGLIVIATNEDVMKIVDGGFAINAEYSPSYLYELAKMDGAIVLSGDVKKILFANAQLIPDYFIETSETGTRHRTAERVAKQTGAIVIGISQRRNVITVYRGNEKYVVEDISKIFTKANQAIQTLEKYKTVLDQAVTNLNALEFNDLVTIYDVALVMQKMEMVMRVTSIIEKYVIELGDEGTLVSMQLEELMGTTRIDQKLIFKDYNKENTEIKELMKKVKNLNSEELIELVNMAKLLGYSGFSESMDMPIKTRGYRILSKIHRLPTAIIENLVNYFENFQQILDASIEELDEVEGIGEIRATYIKNGLIKMKQLVLLDRHI.

The DAC domain occupies 7-147 (NKNMLYALKM…EKYVVEDISK (141 aa)). ATP contacts are provided by residues glycine 74, leucine 92, and 105-109 (TRHRT).

The protein belongs to the DisA family. In terms of assembly, homooctamer. It depends on Mg(2+) as a cofactor.

The enzyme catalyses 2 ATP = 3',3'-c-di-AMP + 2 diphosphate. Functionally, participates in a DNA-damage check-point that is active prior to asymmetric division when DNA is damaged. DisA forms globular foci that rapidly scan along the chromosomes during sporulation, searching for lesions. When a lesion is present, DisA pauses at the lesion site. This triggers a cellular response that culminates in a temporary block in sporulation initiation. In terms of biological role, also has diadenylate cyclase activity, catalyzing the condensation of 2 ATP molecules into cyclic di-AMP (c-di-AMP). c-di-AMP acts as a signaling molecule that couples DNA integrity with progression of sporulation. The rise in c-di-AMP level generated by DisA while scanning the chromosome, operates as a positive signal that advances sporulation; upon encountering a lesion, the DisA focus arrests at the damaged site and halts c-di-AMP synthesis. This Clostridioides difficile (strain 630) (Peptoclostridium difficile) protein is DNA integrity scanning protein DisA.